Reading from the N-terminus, the 507-residue chain is Keratin, type II cuticular Hb5 (507 aa).

The segment at 1–123 is head; sequence MSCRSYRISS…PNAQCVKQEE (123 aa). The region spanning 123–434 is the IF rod domain; sequence EKEQIKSLNS…RLLEGEEHRL (312 aa). The segment at 124 to 158 is coil 1A; that stretch reads KEQIKSLNSRFAAFIDKVRFLEQQNKLLETKWQFY. A linker 1 region spans residues 159–168; it reads QNQRCCESNL. Residues 169–269 form a coil 1B region; that stretch reads EPLFSGYIET…YEEEIRVLQA (101 aa). K229 is covalently cross-linked (Glycyl lysine isopeptide (Lys-Gly) (interchain with G-Cter in SUMO1)). The segment at 270–286 is linker 12; the sequence is HISDTSVIVKMDNSRDL. The segment at 287-430 is coil 2; the sequence is NMDCIIAEIK…ATYRRLLEGE (144 aa). The tail stretch occupies residues 431–507; the sequence is EHRLCEGVGS…CGSSRSVRFA (77 aa).

The protein belongs to the intermediate filament family. Heterotetramer of two type I and two type II keratins. In terms of tissue distribution, synthesis occurs immediately above a small population of matrix cells at the base of the hair bulb and the trichocytes lining the dermal papilla and extends upward through the matrix and ends in the lower part of the cortex of the hair shaft.

The chain is Keratin, type II cuticular Hb5 (KRT85) from Homo sapiens (Human).